The primary structure comprises 241 residues: Leucyl/phenylalanyl-tRNA--protein transferase (241 aa).

It belongs to the L/F-transferase family.

It localises to the cytoplasm. It carries out the reaction N-terminal L-lysyl-[protein] + L-leucyl-tRNA(Leu) = N-terminal L-leucyl-L-lysyl-[protein] + tRNA(Leu) + H(+). It catalyses the reaction N-terminal L-arginyl-[protein] + L-leucyl-tRNA(Leu) = N-terminal L-leucyl-L-arginyl-[protein] + tRNA(Leu) + H(+). The enzyme catalyses L-phenylalanyl-tRNA(Phe) + an N-terminal L-alpha-aminoacyl-[protein] = an N-terminal L-phenylalanyl-L-alpha-aminoacyl-[protein] + tRNA(Phe). Functionally, functions in the N-end rule pathway of protein degradation where it conjugates Leu, Phe and, less efficiently, Met from aminoacyl-tRNAs to the N-termini of proteins containing an N-terminal arginine or lysine. In Colwellia psychrerythraea (strain 34H / ATCC BAA-681) (Vibrio psychroerythus), this protein is Leucyl/phenylalanyl-tRNA--protein transferase.